The sequence spans 638 residues: 1-deoxy-D-xylulose-5-phosphate synthase (638 aa).

Thiamine diphosphate-binding positions include histidine 71 and 112-114; that span reads SHA. Aspartate 144 is a binding site for Mg(2+). Thiamine diphosphate-binding positions include 145–146, asparagine 173, tyrosine 284, and glutamate 365; that span reads GA. Asparagine 173 serves as a coordination point for Mg(2+).

Belongs to the transketolase family. DXPS subfamily. In terms of assembly, homodimer. Mg(2+) serves as cofactor. The cofactor is thiamine diphosphate.

The catalysed reaction is D-glyceraldehyde 3-phosphate + pyruvate + H(+) = 1-deoxy-D-xylulose 5-phosphate + CO2. It participates in metabolic intermediate biosynthesis; 1-deoxy-D-xylulose 5-phosphate biosynthesis; 1-deoxy-D-xylulose 5-phosphate from D-glyceraldehyde 3-phosphate and pyruvate: step 1/1. Its function is as follows. Catalyzes the acyloin condensation reaction between C atoms 2 and 3 of pyruvate and glyceraldehyde 3-phosphate to yield 1-deoxy-D-xylulose-5-phosphate (DXP). The protein is 1-deoxy-D-xylulose-5-phosphate synthase of Mycobacterium sp. (strain JLS).